Consider the following 178-residue polypeptide: Cytochrome b6-f complex iron-sulfur subunit (178 aa).

The helical transmembrane segment at Leu-20–Ile-42 threads the bilayer. The 91-residue stretch at Thr-71–Val-161 folds into the Rieske domain. Residues Cys-107, His-109, Cys-125, and His-128 each contribute to the [2Fe-2S] cluster site. A disulfide bridge connects residues Cys-112 and Cys-127.

The protein belongs to the Rieske iron-sulfur protein family. The 4 large subunits of the cytochrome b6-f complex are cytochrome b6, subunit IV (17 kDa polypeptide, PetD), cytochrome f and the Rieske protein, while the 4 small subunits are PetG, PetL, PetM and PetN. The complex functions as a dimer. [2Fe-2S] cluster is required as a cofactor.

It is found in the cellular thylakoid membrane. The catalysed reaction is 2 oxidized [plastocyanin] + a plastoquinol + 2 H(+)(in) = 2 reduced [plastocyanin] + a plastoquinone + 4 H(+)(out). Functionally, component of the cytochrome b6-f complex, which mediates electron transfer between photosystem II (PSII) and photosystem I (PSI), cyclic electron flow around PSI, and state transitions. The sequence is that of Cytochrome b6-f complex iron-sulfur subunit from Synechococcus sp. (strain WH7803).